A 633-amino-acid chain; its full sequence is ATP-dependent RNA helicase mrh4, mitochondrial (633 aa).

Residues 1 to 38 (MNRLGRLSLPLRPQVCLLCQTQATMSSPLAGWQAVRSM) constitute a mitochondrion transit peptide. The segment at 50–115 (MVLSSNVDKS…KQKPDSPLYK (66 aa)) is disordered. Over residues 52 to 63 (LSSNVDKSSLKQ) the composition is skewed to polar residues. The segment covering 98–109 (RSGDSEDDKQKP) has biased composition (basic and acidic residues). The short motif at 142–175 (SSFDQFPLLPVVRHSISSQALSRTGDIVPTPIQR) is the Q motif element. The Helicase ATP-binding domain maps to 195–407 (SDHEPNFEQY…RKRYPDIRRL (213 aa)). 208–215 (AETGSGKT) contacts ATP. A DEAD box motif is present at residues 354–357 (DEAD). In terms of domain architecture, Helicase C-terminal spans 458–633 (FLAQAGPKVK…EGMFRGQALI (176 aa)).

It belongs to the DEAD box helicase family. MRH4 subfamily.

It is found in the mitochondrion. It catalyses the reaction ATP + H2O = ADP + phosphate + H(+). Its function is as follows. ATP-binding RNA helicase involved in mitochondrial RNA metabolism. Required for maintenance of mitochondrial DNA. The chain is ATP-dependent RNA helicase mrh4, mitochondrial (mrh4) from Aspergillus niger (strain ATCC MYA-4892 / CBS 513.88 / FGSC A1513).